Consider the following 334-residue polypeptide: Malate dehydrogenase 2 (334 aa).

Residue isoleucine 19–glycine 25 participates in NAD(+) binding. Substrate-binding residues include arginine 100 and arginine 106. Residues asparagine 113 and valine 136 to asparagine 138 contribute to the NAD(+) site. 2 residues coordinate substrate: asparagine 138 and arginine 169. Catalysis depends on histidine 193, which acts as the Proton acceptor.

This sequence belongs to the LDH/MDH superfamily.

The enzyme catalyses (S)-malate + NAD(+) = oxaloacetate + NADH + H(+). Its function is as follows. Catalyzes the reversible oxidation of malate to oxaloacetate. This Aquifex aeolicus (strain VF5) protein is Malate dehydrogenase 2.